A 314-amino-acid polypeptide reads, in one-letter code: Olfactory receptor-like protein I9 (314 aa).

The Extracellular portion of the chain corresponds to 1–25 (MTRRNQTAISQFFLLGLPFPPEYQH). N-linked (GlcNAc...) asparagine glycosylation occurs at N5. Residues 26–50 (LFYALFLAMYLTTLLGNLIIIILIL) form a helical membrane-spanning segment. Residues 51 to 57 (LDSHLHT) lie on the Cytoplasmic side of the membrane. Residues 58 to 79 (PMYLFLSNLSFADLCFSSVTMP) form a helical membrane-spanning segment. Residues 80–100 (KLLQNMQSQVPSIPYAGCLAQ) are Extracellular-facing. Cysteines 97 and 189 form a disulfide. Residues 101-120 (IYFFLFFGDLGNFLLVAMAY) traverse the membrane as a helical segment. At 121–139 (DRYVAICFPLHYMSIMSPK) the chain is on the cytoplasmic side. The chain crosses the membrane as a helical span at residues 140–158 (LCVSLVVLSWVLTTFHAML). The Extracellular portion of the chain corresponds to 159–196 (HTLLMARLSFCEDSVIPHYFCDMSTLLKVACSDTHDNE). The chain crosses the membrane as a helical span at residues 197–219 (LAIFILGGPIVVLPFLLIIVSYA). Over 220–236 (RIVSSIFKVPSSQSIHK) the chain is Cytoplasmic. Residues 237–260 (AFSTCGSHLSVVSLFYGTVIGLYL) form a helical membrane-spanning segment. The Extracellular portion of the chain corresponds to 261-272 (CPSANNSTVKET). A helical membrane pass occupies residues 273 to 292 (VMSLMYTMVTPMLNPFIYSL). Topologically, residues 293 to 314 (RNRDIKDALEKIMCKKQIPSFL) are cytoplasmic.

The protein belongs to the G-protein coupled receptor 1 family. Olfactory epithelium.

It localises to the cell membrane. Functionally, odorant receptor. The polypeptide is Olfactory receptor-like protein I9 (Rattus norvegicus (Rat)).